A 235-amino-acid polypeptide reads, in one-letter code: Large ribosomal subunit protein uL1 (235 aa).

Belongs to the universal ribosomal protein uL1 family. Part of the 50S ribosomal subunit.

Binds directly to 23S rRNA. The L1 stalk is quite mobile in the ribosome, and is involved in E site tRNA release. In terms of biological role, protein L1 is also a translational repressor protein, it controls the translation of the L11 operon by binding to its mRNA. The sequence is that of Large ribosomal subunit protein uL1 from Mycolicibacterium vanbaalenii (strain DSM 7251 / JCM 13017 / BCRC 16820 / KCTC 9966 / NRRL B-24157 / PYR-1) (Mycobacterium vanbaalenii).